The primary structure comprises 225 residues: Cytidylate kinase (225 aa).

11 to 19 contributes to the ATP binding site; it reads GPAAAGKST.

Belongs to the cytidylate kinase family. Type 1 subfamily.

It is found in the cytoplasm. It catalyses the reaction CMP + ATP = CDP + ADP. The enzyme catalyses dCMP + ATP = dCDP + ADP. In Bacillus cytotoxicus (strain DSM 22905 / CIP 110041 / 391-98 / NVH 391-98), this protein is Cytidylate kinase.